Reading from the N-terminus, the 281-residue chain is Pantothenate synthetase (281 aa).

Residue 30 to 37 participates in ATP binding; the sequence is MGYLHEGH. H37 functions as the Proton donor in the catalytic mechanism. Q61 provides a ligand contact to (R)-pantoate. Position 61 (Q61) interacts with beta-alanine. 147 to 150 contributes to the ATP binding site; sequence GEKD. Q153 serves as a coordination point for (R)-pantoate. Residues I176 and 184–187 contribute to the ATP site; that span reads KSSR.

The protein belongs to the pantothenate synthetase family. As to quaternary structure, homodimer.

The protein resides in the cytoplasm. It carries out the reaction (R)-pantoate + beta-alanine + ATP = (R)-pantothenate + AMP + diphosphate + H(+). It participates in cofactor biosynthesis; (R)-pantothenate biosynthesis; (R)-pantothenate from (R)-pantoate and beta-alanine: step 1/1. Its function is as follows. Catalyzes the condensation of pantoate with beta-alanine in an ATP-dependent reaction via a pantoyl-adenylate intermediate. The sequence is that of Pantothenate synthetase from Clostridium botulinum (strain ATCC 19397 / Type A).